The sequence spans 161 residues: Allophycocyanin beta chain (161 aa).

Asn71 carries the N4-methylasparagine modification. Cys81 contacts (2R,3E)-phycocyanobilin.

This sequence belongs to the phycobiliprotein family. In terms of assembly, heterodimer of an alpha and a beta chain. Post-translationally, contains one covalently linked phycocyanobilin chromophore.

The protein resides in the plastid. It localises to the chloroplast thylakoid membrane. Functionally, light-harvesting photosynthetic bile pigment-protein from the phycobiliprotein complex. Allophycocyanin has a maximum absorption at approximately 650 nanometers. The sequence is that of Allophycocyanin beta chain (apcB) from Aglaothamnion neglectum (Red alga).